We begin with the raw amino-acid sequence, 185 residues long: Ribosome-recycling factor (185 aa).

This sequence belongs to the RRF family.

The protein resides in the cytoplasm. Its function is as follows. Responsible for the release of ribosomes from messenger RNA at the termination of protein biosynthesis. May increase the efficiency of translation by recycling ribosomes from one round of translation to another. The protein is Ribosome-recycling factor of Francisella tularensis subsp. tularensis (strain FSC 198).